Here is a 419-residue protein sequence, read N- to C-terminus: UDP-N-acetylglucosamine 1-carboxyvinyltransferase (419 aa).

22-23 contributes to the phosphoenolpyruvate binding site; the sequence is KN. Residue arginine 95 participates in UDP-N-acetyl-alpha-D-glucosamine binding. The active-site Proton donor is cysteine 119. Cysteine 119 is subject to 2-(S-cysteinyl)pyruvic acid O-phosphothioketal. UDP-N-acetyl-alpha-D-glucosamine-binding positions include 164–167, aspartate 308, and isoleucine 330; that span reads KVSV.

The protein belongs to the EPSP synthase family. MurA subfamily.

The protein localises to the cytoplasm. The catalysed reaction is phosphoenolpyruvate + UDP-N-acetyl-alpha-D-glucosamine = UDP-N-acetyl-3-O-(1-carboxyvinyl)-alpha-D-glucosamine + phosphate. It functions in the pathway cell wall biogenesis; peptidoglycan biosynthesis. In terms of biological role, cell wall formation. Adds enolpyruvyl to UDP-N-acetylglucosamine. This Rickettsia prowazekii (strain Madrid E) protein is UDP-N-acetylglucosamine 1-carboxyvinyltransferase.